We begin with the raw amino-acid sequence, 394 residues long: Guanine nucleotide-binding protein G(s) subunit alpha isoforms short (394 aa).

The disordered stretch occupies residues 1–23; that stretch reads MGCLGNSKTEDQRNEEKAQREAN. Gly-2 carries the N-palmitoyl glycine lipid modification. Residue Cys-3 is the site of S-palmitoyl cysteine attachment. The span at 8–23 shows a compositional bias: basic and acidic residues; the sequence is KTEDQRNEEKAQREAN. The G-alpha domain maps to 39-394; that stretch reads ATHRLLLLGA…RMHLRQYELL (356 aa). Residues 42–55 are G1 motif; that stretch reads RLLLLGAGESGKST. 47–55 contacts GTP; it reads GAGESGKST. Ser-54 lines the Mg(2+) pocket. Residues 68–90 form a disordered region; sequence FNGEGGEEDPQAARSNSDGEKAT. The tract at residues 196–204 is G2 motif; that stretch reads DLLRCRVLT. Residues 197–204, 223–227, and 292–295 contribute to the GTP site; these read LLRCRVLT, DVGGQ, and NKQD. Position 204 (Thr-204) interacts with Mg(2+). The G3 motif stretch occupies residues 219 to 228; that stretch reads FHMFDVGGQR. Residues 288-295 form a G4 motif region; it reads ILFLNKQD. A Glycyl lysine isopeptide (Lys-Gly) (interchain with G-Cter in ubiquitin) cross-link involves residue Lys-300. Ser-352 is modified (phosphoserine). The interval 364 to 369 is G5 motif; sequence TCAVDT. Position 366 (Ala-366) interacts with GTP.

It belongs to the G-alpha family. G(s) subfamily. In terms of assembly, heterotrimeric G proteins are composed of 3 units; alpha, beta and gamma. The alpha chain contains the guanine nucleotide binding site. Component of the TAS2R14-GNAS2 complex, consisting of TAS2R14, GNAS2, GNB1 and GNG2; within the complex interacts with TAS2R14; this complex plays a role in the perception of bitterness. Interacts with CRY1; the interaction may block GPCR-mediated regulation of cAMP concentrations. Interacts with ADCY6 and stimulates its adenylyl cyclase activity. Interacts with ADCY2 and ADCY5. Interacts (GDP-bound form) with RIC8B; promoting GNAS folding and association with the plasma membrane. Stimulates the ADCY5 adenylyl cyclase activity. Interaction with SASH1. Interacts with GASL2L2.

It localises to the cell membrane. The catalysed reaction is GTP + H2O = GDP + phosphate + H(+). In terms of biological role, guanine nucleotide-binding proteins (G proteins) function as transducers in numerous signaling pathways controlled by G protein-coupled receptors (GPCRs). The alpha chain contains the guanine nucleotide binding site and alternates between an active, GTP-bound state and an inactive, GDP-bound state. Signaling by an activated GPCR promotes GDP release and GTP binding. The alpha subunit has a low GTPase activity that converts bound GTP to GDP, thereby terminating the signal. Both GDP release and GTP hydrolysis are modulated by numerous regulatory proteins. Signaling involves the activation of adenylyl cyclases, resulting in increased levels of the signaling molecule cAMP. Functions downstream of beta-adrenergic receptors. Stimulates the Ras signaling pathway via RAPGEF2. The polypeptide is Guanine nucleotide-binding protein G(s) subunit alpha isoforms short (Gnas) (Mus musculus (Mouse)).